Consider the following 1349-residue polypeptide: DNA-directed RNA polymerase subunit beta' (1349 aa).

Residues cysteine 70, cysteine 72, cysteine 85, and cysteine 88 each coordinate Zn(2+). Residues aspartate 460, aspartate 462, and aspartate 464 each contribute to the Mg(2+) site. Zn(2+) is bound by residues cysteine 801, cysteine 875, cysteine 882, and cysteine 885.

It belongs to the RNA polymerase beta' chain family. In terms of assembly, the RNAP catalytic core consists of 2 alpha, 1 beta, 1 beta' and 1 omega subunit. When a sigma factor is associated with the core the holoenzyme is formed, which can initiate transcription. Requires Mg(2+) as cofactor. The cofactor is Zn(2+).

The catalysed reaction is RNA(n) + a ribonucleoside 5'-triphosphate = RNA(n+1) + diphosphate. Its function is as follows. DNA-dependent RNA polymerase catalyzes the transcription of DNA into RNA using the four ribonucleoside triphosphates as substrates. The polypeptide is DNA-directed RNA polymerase subunit beta' (Desulfotalea psychrophila (strain LSv54 / DSM 12343)).